The sequence spans 59 residues: Large ribosomal subunit protein uL30 (59 aa).

Belongs to the universal ribosomal protein uL30 family. In terms of assembly, part of the 50S ribosomal subunit.

The sequence is that of Large ribosomal subunit protein uL30 from Nocardia farcinica (strain IFM 10152).